The chain runs to 689 residues: Armadillo-like helical domain-containing protein 3 (689 aa).

The helical transmembrane segment at 520–538 threads the bilayer; that stretch reads IFQLALQVVNLFNMFITYG.

The protein belongs to the ARMH3 family.

It is found in the golgi apparatus membrane. The protein resides in the cytoplasm. May be involved in Golgi maintenance and protein secretion. This is Armadillo-like helical domain-containing protein 3 from Danio rerio (Zebrafish).